We begin with the raw amino-acid sequence, 497 residues long: UDP-N-acetylmuramoyl-L-alanyl-D-glutamate--2,6-diaminopimelate ligase (497 aa).

S29 provides a ligand contact to UDP-N-acetyl-alpha-D-muramoyl-L-alanyl-D-glutamate. ATP is bound at residue 116–122 (GTNGKTT). UDP-N-acetyl-alpha-D-muramoyl-L-alanyl-D-glutamate-binding positions include N157, 158 to 159 (TT), S185, Q191, and R193. K225 carries the N6-carboxylysine modification. Residues R392, 416-419 (DNPR), G467, and E471 each bind meso-2,6-diaminopimelate. The Meso-diaminopimelate recognition motif motif lies at 416–419 (DNPR).

Belongs to the MurCDEF family. MurE subfamily. It depends on Mg(2+) as a cofactor. Carboxylation is probably crucial for Mg(2+) binding and, consequently, for the gamma-phosphate positioning of ATP.

Its subcellular location is the cytoplasm. The catalysed reaction is UDP-N-acetyl-alpha-D-muramoyl-L-alanyl-D-glutamate + meso-2,6-diaminopimelate + ATP = UDP-N-acetyl-alpha-D-muramoyl-L-alanyl-gamma-D-glutamyl-meso-2,6-diaminopimelate + ADP + phosphate + H(+). It functions in the pathway cell wall biogenesis; peptidoglycan biosynthesis. Its function is as follows. Catalyzes the addition of meso-diaminopimelic acid to the nucleotide precursor UDP-N-acetylmuramoyl-L-alanyl-D-glutamate (UMAG) in the biosynthesis of bacterial cell-wall peptidoglycan. The polypeptide is UDP-N-acetylmuramoyl-L-alanyl-D-glutamate--2,6-diaminopimelate ligase (Buchnera aphidicola subsp. Acyrthosiphon pisum (strain APS) (Acyrthosiphon pisum symbiotic bacterium)).